The sequence spans 287 residues: Large ribosomal subunit protein uL2 (287 aa).

Residues 221–287 (RGSVMNPCDH…SKRSRGGRDS (67 aa)) form a disordered region. Residues 258 to 287 (KTRKKNKPSNKLVVRRRRRVSKRSRGGRDS) show a composition bias toward basic residues.

Belongs to the universal ribosomal protein uL2 family. Part of the 50S ribosomal subunit. Forms a bridge to the 30S subunit in the 70S ribosome.

Its function is as follows. One of the primary rRNA binding proteins. Required for association of the 30S and 50S subunits to form the 70S ribosome, for tRNA binding and peptide bond formation. It has been suggested to have peptidyltransferase activity; this is somewhat controversial. Makes several contacts with the 16S rRNA in the 70S ribosome. This is Large ribosomal subunit protein uL2 from Prochlorococcus marinus (strain AS9601).